A 789-amino-acid polypeptide reads, in one-letter code: Ent-kaur-16-ene synthase, chloroplastic (789 aa).

Residues aspartate 536, aspartate 540, asparagine 680, serine 684, and glutamate 688 each coordinate Mg(2+). The DDXXD motif signature appears at 536–540; the sequence is DDFYD.

Belongs to the terpene synthase family. Mg(2+) serves as cofactor. The N-terminus is blocked. As to expression, abundant in most tissues. Present in low amounts in mature cotyledons.

It localises to the plastid. The protein localises to the chloroplast. The catalysed reaction is ent-copalyl diphosphate = ent-kaur-16-ene + diphosphate. Its pathway is plant hormone biosynthesis; gibberellin biosynthesis. In terms of biological role, catalyzes the conversion of ent-copalyl diphosphate to the gibberellin precursor ent-kaur-16-ene. The protein is Ent-kaur-16-ene synthase, chloroplastic of Cucurbita maxima (Pumpkin).